The primary structure comprises 231 residues: MSERDSGSSGRAKAKRQPGAKAPFGPFVRKPVEKVEANAAAAQKARAESAESWPDDAVEVGAIVDAYGLKGWVKVAAHADAGHGGDALLSTKRWWLEKGRERQSTPCLQSKVHGDSIVAQLGGTADRDAALALRGHRVYVRRRDFPALGTDEYYWVDLVGLDVVNEAGIELGKVADLIDNGAQSVLRIEYPAIGKDGKPVIGERLIPFVGVYVKTVDQAAKKIIVDWEADY.

The interval 1 to 29 is disordered; sequence MSERDSGSSGRAKAKRQPGAKAPFGPFVR. Positions 150–231 constitute a PRC barrel domain; that stretch reads TDEYYWVDLV…KIIVDWEADY (82 aa).

Belongs to the RimM family. Binds ribosomal protein uS19.

The protein resides in the cytoplasm. An accessory protein needed during the final step in the assembly of 30S ribosomal subunit, possibly for assembly of the head region. Essential for efficient processing of 16S rRNA. May be needed both before and after RbfA during the maturation of 16S rRNA. It has affinity for free ribosomal 30S subunits but not for 70S ribosomes. This chain is Ribosome maturation factor RimM, found in Paraburkholderia phymatum (strain DSM 17167 / CIP 108236 / LMG 21445 / STM815) (Burkholderia phymatum).